The primary structure comprises 144 residues: uncharacterized protein (144 aa).

A helical transmembrane segment spans residues 25 to 47 (LTLLDGCCVALVLALTAWSGFFV).

Its subcellular location is the membrane. This is an uncharacterized protein from Treponema pallidum (strain Nichols).